Consider the following 123-residue polypeptide: Small ribosomal subunit protein uS12 (123 aa).

Position 89 is a 3-methylthioaspartic acid (D89). The segment at 103–123 is disordered; the sequence is DTSGVQDRRQGRSKYGAKRPK. A compositionally biased stretch (basic residues) spans 113–123; the sequence is GRSKYGAKRPK.

This sequence belongs to the universal ribosomal protein uS12 family. As to quaternary structure, part of the 30S ribosomal subunit. Contacts proteins S8 and S17. May interact with IF1 in the 30S initiation complex.

Its function is as follows. With S4 and S5 plays an important role in translational accuracy. In terms of biological role, interacts with and stabilizes bases of the 16S rRNA that are involved in tRNA selection in the A site and with the mRNA backbone. Located at the interface of the 30S and 50S subunits, it traverses the body of the 30S subunit contacting proteins on the other side and probably holding the rRNA structure together. The combined cluster of proteins S8, S12 and S17 appears to hold together the shoulder and platform of the 30S subunit. This Nitratidesulfovibrio vulgaris (strain ATCC 29579 / DSM 644 / CCUG 34227 / NCIMB 8303 / VKM B-1760 / Hildenborough) (Desulfovibrio vulgaris) protein is Small ribosomal subunit protein uS12.